The chain runs to 1051 residues: Protein ALWAYS EARLY 2 (1051 aa).

Composition is skewed to basic residues over residues 1–11 (MAPVRKSRSVN) and 27–36 (SKKNKLRKKL). The interval 1–37 (MAPVRKSRSVNKRFTNETSPRKDAGKSKKNKLRKKLS) is disordered. The 55-residue stretch at 39 to 93 (KLGPQWTRLELERFYDAYRKHGQEWRRVAAAIRNSRSVDMVEALFNMNRAYLSLP) folds into the SANT domain. Disordered regions lie at residues 114 to 158 (EGSG…IGSP), 170 to 210 (ANGT…RKQF), 225 to 293 (TDAS…KDTT), 323 to 375 (AECN…TSGA), 397 to 605 (SELS…SSRS), and 948 to 981 (SIEH…NAQM). The span at 120–130 (GEGHDASEVPR) shows a compositional bias: basic and acidic residues. The span at 131–140 (KQQKRKRAKP) shows a compositional bias: basic residues. The span at 279 to 293 (ESSRERKLDSDKDTT) shows a compositional bias: basic and acidic residues. Positions 323–332 (AECNDSDDNG) are enriched in acidic residues. Basic and acidic residues-rich tracts occupy residues 350 to 372 (AAIE…DKHT) and 403 to 417 (LKEE…EKSS). Positions 560–574 (KQVSDSGPTSLSQKP) are enriched in polar residues. Over residues 586 to 597 (LQEKAKSSETTH) the composition is skewed to basic and acidic residues. Positions 967–981 (NDLNSQDGSEKNAQM) are enriched in polar residues.

As to quaternary structure, interacts with SNL1 (via PAH3). In terms of tissue distribution, expressed ubiquitously in vegetative and reproductive tissues.

Its subcellular location is the nucleus. The chain is Protein ALWAYS EARLY 2 (ALY2) from Arabidopsis thaliana (Mouse-ear cress).